Here is a 367-residue protein sequence, read N- to C-terminus: Ribosomal lysine N-methyltransferase 5 (367 aa).

Residues W110, 170-172 (GAG), D192, W256, and M288 each bind S-adenosyl-L-methionine.

This sequence belongs to the class I-like SAM-binding methyltransferase superfamily. RKM5 family.

In terms of biological role, S-adenosyl-L-methionine-dependent protein-lysine N-methyltransferase that monomethylates 60S ribosomal protein L1 (RPL1A and RPL1B) at 'Lys-46'. The polypeptide is Ribosomal lysine N-methyltransferase 5 (RKM5) (Saccharomyces cerevisiae (strain JAY291) (Baker's yeast)).